A 346-amino-acid chain; its full sequence is Archaeosine synthase subunit beta (346 aa).

Residues 36–276 (GVQTKTLTVI…LRQAKAAHPE (241 aa)) form the Radical SAM core domain. Residues Cys-51, Cys-59, and Cys-62 each coordinate [4Fe-4S] cluster.

This sequence belongs to the radical SAM superfamily. RaSEA family. In terms of assembly, forms a robust complex with the archaeosine synthase alpha subunit ArcS. This complex likely consists of an alpha(2)beta(2) heterotetrameric structure. [4Fe-4S] cluster serves as cofactor.

It carries out the reaction 7-N-[(5S)-5-amino-5-carboxypentyl]formamidino-7-deazaguanosine(15) in tRNA + S-adenosyl-L-methionine = archaeosine(15) in tRNA + L-1-piperideine-6-carboxylate + 5'-deoxyadenosine + L-methionine + 2 H(+). It functions in the pathway tRNA modification; archaeosine-tRNA biosynthesis. In terms of biological role, radical SAM enzyme involved in the synthesis of archaeosine, a modified nucleoside present in the dihydrouridine loop (D-loop) of archaeal tRNAs. Catalyzes the cleavage of the C(epsilon)-N bond of the lysine moiety of q0kN15-tRNA, leading to the formation of archaeosine at position 15 in tRNAs. The protein is Archaeosine synthase subunit beta of Methanosarcina acetivorans (strain ATCC 35395 / DSM 2834 / JCM 12185 / C2A).